Consider the following 264-residue polypeptide: Osteopontin (264 aa).

Residues 1–16 (MKLAFLCLCFISIAAA) form the signal peptide. Disordered regions lie at residues 21–141 (KSRQ…RGDS) and 166–264 (IEDD…EVTR). Basic and acidic residues predominate over residues 31–51 (SEEKYDPRSHHTHRYHQDHVD). Residues 52-73 (SQSQEHLQQTQNDLASLQQTHY) are compositionally biased toward polar residues. Acidic residues predominate over residues 97-118 (AVDDDDDDDNDSNDTDESDEVV). N-linked (GlcNAc...) asparagine glycosylation is found at Asn106 and Asn109. Residues 132-134 (RGD) carry the Cell attachment site motif. Residues 186 to 212 (KESREQDSRELAQHQSVENDSRPRFDS) are compositionally biased toward basic and acidic residues. Residues Asn204 and Asn242 are each glycosylated (N-linked (GlcNAc...) asparagine). Positions 233–246 (ASRSAVDTSNQTLE) are enriched in polar residues. Residues 252–264 (EDRHSIENNEVTR) show a composition bias toward basic and acidic residues.

The protein belongs to the osteopontin family. Post-translationally, extensively phosphorylated on serine residues.

The protein localises to the secreted. In terms of biological role, major non-collagenous bone protein that binds tightly to hydroxyapatite. Appears to form an integral part of the mineralized matrix. Probably important to cell-matrix interaction. Functionally, acts as a cytokine involved in enhancing production of interferon-gamma and interleukin-12 and reducing production of interleukin-10 and is essential in the pathway that leads to type I immunity. The sequence is that of Osteopontin (SPP1) from Gallus gallus (Chicken).